Consider the following 287-residue polypeptide: uncharacterized protein (287 aa).

A signal peptide spans 1-20 (MKVICGSVFLFSLFFQVVLG). Residues 22-201 (YFSSSSGNPN…AFYGPRRNIK (180 aa)) lie on the Extracellular side of the membrane. N-linked (GlcNAc...) asparagine glycans are attached at residues Asn-120, Asn-154, and Asn-166. The chain crosses the membrane as a helical span at residues 202–222 (AAIAVPSVILGLILVALVYYA). Residues 223-287 (YRKDTWKIYM…YYQSQVKKFH (65 aa)) are Cytoplasmic-facing.

The protein resides in the membrane. This is an uncharacterized protein from Schizosaccharomyces pombe (strain 972 / ATCC 24843) (Fission yeast).